We begin with the raw amino-acid sequence, 272 residues long: Tryptophan synthase alpha chain (272 aa).

Residues E49 and D60 each act as proton acceptor in the active site.

It belongs to the TrpA family. Tetramer of two alpha and two beta chains.

It carries out the reaction (1S,2R)-1-C-(indol-3-yl)glycerol 3-phosphate + L-serine = D-glyceraldehyde 3-phosphate + L-tryptophan + H2O. Its pathway is amino-acid biosynthesis; L-tryptophan biosynthesis; L-tryptophan from chorismate: step 5/5. In terms of biological role, the alpha subunit is responsible for the aldol cleavage of indoleglycerol phosphate to indole and glyceraldehyde 3-phosphate. The chain is Tryptophan synthase alpha chain from Hydrogenovibrio crunogenus (strain DSM 25203 / XCL-2) (Thiomicrospira crunogena).